The following is a 139-amino-acid chain: Lymphocyte antigen 6H (139 aa).

The signal sequence occupies residues 1–25 (MLPAAMKSLGLALLALLLCPSPAHG). Residues 26 to 113 (LWCQDCTLAN…CEKDLCNGAS (88 aa)) form the UPAR/Ly6 domain. 5 disulfides stabilise this stretch: cysteine 28-cysteine 51, cysteine 31-cysteine 39, cysteine 44-cysteine 72, cysteine 76-cysteine 103, and cysteine 104-cysteine 109. A glycan (N-linked (GlcNAc...) asparagine) is linked at asparagine 35. Residue asparagine 110 is the site of GPI-anchor amidated asparagine attachment. Residues 111 to 139 (GASVAGRSPWALAGGLLLSLGPALLWAGP) constitute a propeptide, removed in mature form.

Interacts with CHRNA4 and CHRNA7. As to expression, strongly expressed in brain, also found in lower levels in eye and reproductive tissues.

Its subcellular location is the cell membrane. Its function is as follows. Believed to act as modulator of nicotinic acetylcholine receptors (nAChRs) activity. In vitro inhibits alpha-3:beta-4-containing nAChRs maximum response. In vitro inhibits alpha-3:beta-4-containing nAChRs maximum response. May play a role in the intracellular trafficking of alpha-7-containing nAChRs and may inhibit their expression at the cell surface. Seems to inhibit alpha-7/CHRNA7 signaling in hippocampal neurons. The chain is Lymphocyte antigen 6H (Ly6h) from Mus musculus (Mouse).